The following is a 385-amino-acid chain: Multidrug resistance protein MdtE (385 aa).

Positions 1 to 20 are cleaved as a signal peptide; that stretch reads MNRRRKLLIPLLFCGAMLTA. Cys21 is lipidated: N-palmitoyl cysteine. The S-diacylglycerol cysteine moiety is linked to residue Cys21.

Belongs to the membrane fusion protein (MFP) (TC 8.A.1) family. Homotrimer. Part of the tripartite efflux system MdtEF-TolC, which is composed of an inner membrane transporter, MdtF, a membrane fusion protein, MdtE, and an outer membrane component, TolC. The complex forms a large protein conduit and can translocate molecules across both the inner and outer membranes.

It is found in the cell inner membrane. In terms of biological role, part of the tripartite efflux system MdtEF-TolC, which confers resistance to various compounds. In Escherichia coli O6:H1 (strain CFT073 / ATCC 700928 / UPEC), this protein is Multidrug resistance protein MdtE (mdtE).